The chain runs to 911 residues: DNA mismatch repair protein MutS (911 aa).

Residues 1-95 (MALQGNLFGD…PWSHHSQVTP (95 aa)) form a disordered region. Positions 23 to 42 (KRQDEPDQLDDHELTQDAKQ) are enriched in basic and acidic residues. 727–734 (GPNASGKS) is an ATP binding site.

Belongs to the DNA mismatch repair MutS family.

Its function is as follows. This protein is involved in the repair of mismatches in DNA. It is possible that it carries out the mismatch recognition step. This protein has a weak ATPase activity. This Synechococcus sp. (strain CC9311) protein is DNA mismatch repair protein MutS.